The following is a 357-amino-acid chain: DNA replication and repair protein RecF (357 aa).

30–37 (GANGSGKT) lines the ATP pocket.

Belongs to the RecF family.

Its subcellular location is the cytoplasm. The RecF protein is involved in DNA metabolism; it is required for DNA replication and normal SOS inducibility. RecF binds preferentially to single-stranded, linear DNA. It also seems to bind ATP. This chain is DNA replication and repair protein RecF, found in Citrobacter koseri (strain ATCC BAA-895 / CDC 4225-83 / SGSC4696).